The following is a 308-amino-acid chain: ATP synthase gamma chain (308 aa).

This sequence belongs to the ATPase gamma chain family. As to quaternary structure, F-type ATPases have 2 components, CF(1) - the catalytic core - and CF(0) - the membrane proton channel. CF(1) has five subunits: alpha(3), beta(3), gamma(1), delta(1), epsilon(1). CF(0) has three main subunits: a, b and c.

It is found in the cell membrane. In terms of biological role, produces ATP from ADP in the presence of a proton gradient across the membrane. The gamma chain is believed to be important in regulating ATPase activity and the flow of protons through the CF(0) complex. This is ATP synthase gamma chain from Lacticaseibacillus casei (strain BL23) (Lactobacillus casei).